The sequence spans 282 residues: MGIEVGKRRLVYTTSRNNDRNLDFLKRRRIEDSSSSSDHEDNQRGSLSSSSSSEEDSDRDDSHVSLRQSVDDRDLEITKKREEILDTSEIKPIERQKKSYDDEQGDVDQICKWFMDRYKFPKILYASELLEKATPLLPIVRDMYRGLVDSHYKFEANEMRQSSQRAILSVQEFRNMDLTKFTAGYYGMKRQFQIGEVILQKYKSFLLRRQGDTMKWWGVSDFAHYVLAPEVLVSLCIKEMQLSDDVYDKNARERAYDIFVNTVKFGTLVADQSPLEPWEVTP.

2 stretches are compositionally biased toward basic and acidic residues: residues 22-43 (LDFL…EDNQ) and 60-70 (DDSHVSLRQSV). The interval 22 to 70 (LDFLKRRRIEDSSSSSDHEDNQRGSLSSSSSSEEDSDRDDSHVSLRQSV) is disordered.

It belongs to the RTC4 family.

It localises to the cytoplasm. The protein localises to the nucleus. May be involved in a process influencing telomere capping. This is Restriction of telomere capping protein 4 (RTC4) from Zygosaccharomyces rouxii (strain ATCC 2623 / CBS 732 / NBRC 1130 / NCYC 568 / NRRL Y-229).